Reading from the N-terminus, the 338-residue chain is 3-isopropylmalate dehydrogenase (338 aa).

Residues Arg88, Arg98, Arg122, and Asp212 each contribute to the substrate site. Mg(2+) is bound by residues Asp212, Asp236, and Asp240. An NAD(+)-binding site is contributed by 272-284 (GSAPDIAGQGIAD).

The protein belongs to the isocitrate and isopropylmalate dehydrogenases family. LeuB type 2 subfamily. Homodimer. It depends on Mg(2+) as a cofactor. Mn(2+) serves as cofactor.

The protein resides in the cytoplasm. It carries out the reaction (2R,3S)-3-isopropylmalate + NAD(+) = 4-methyl-2-oxopentanoate + CO2 + NADH. Its pathway is amino-acid biosynthesis; L-leucine biosynthesis; L-leucine from 3-methyl-2-oxobutanoate: step 3/4. Catalyzes the oxidation of 3-carboxy-2-hydroxy-4-methylpentanoate (3-isopropylmalate) to 3-carboxy-4-methyl-2-oxopentanoate. The product decarboxylates to 4-methyl-2 oxopentanoate. The polypeptide is 3-isopropylmalate dehydrogenase (Corynebacterium jeikeium (strain K411)).